An 88-amino-acid chain; its full sequence is LYR motif-containing protein 2 (88 aa).

The transit peptide at 1 to 19 (MAASRLPPAALTLKQFMRR) directs the protein to the mitochondrion.

Belongs to the complex I LYR family.

It is found in the mitochondrion. In terms of biological role, involved in efficient integration of the N-module into mitochondrial respiratory chain complex I. This Mus musculus (Mouse) protein is LYR motif-containing protein 2 (Lyrm2).